The following is a 426-amino-acid chain: Dihydroorotase (426 aa).

Residues H58 and H60 each coordinate Zn(2+). Substrate-binding positions include 60–62 (HLR) and N92. Zn(2+) contacts are provided by D150, H177, and H230. N276 provides a ligand contact to substrate. D303 provides a ligand contact to Zn(2+). Residue D303 is part of the active site. Substrate-binding positions include H307 and 321–322 (FG).

It belongs to the metallo-dependent hydrolases superfamily. DHOase family. Class I DHOase subfamily. Requires Zn(2+) as cofactor.

It catalyses the reaction (S)-dihydroorotate + H2O = N-carbamoyl-L-aspartate + H(+). Its pathway is pyrimidine metabolism; UMP biosynthesis via de novo pathway; (S)-dihydroorotate from bicarbonate: step 3/3. In terms of biological role, catalyzes the reversible cyclization of carbamoyl aspartate to dihydroorotate. This is Dihydroorotase from Listeria monocytogenes serotype 4b (strain F2365).